A 103-amino-acid chain; its full sequence is Putative ribosomal RNA-processing protein 7 homolog B (103 aa).

Residues 1-19 are compositionally biased toward basic and acidic residues; sequence MEAYDQKIAEEEAKAKEEE. Residues 1–25 are disordered; it reads MEAYDQKIAEEEAKAKEEEGVPDEE. A coiled-coil region spans residues 71 to 100; it reads ESKMEHLAQLRKKFEEDKQRIELLRAQRKF.

Belongs to the RRP7 family.

This chain is Putative ribosomal RNA-processing protein 7 homolog B, found in Homo sapiens (Human).